Reading from the N-terminus, the 153-residue chain is Large ribosomal subunit protein bL9 (153 aa).

The protein belongs to the bacterial ribosomal protein bL9 family.

In terms of biological role, binds to the 23S rRNA. The chain is Large ribosomal subunit protein bL9 from Synechococcus sp. (strain JA-3-3Ab) (Cyanobacteria bacterium Yellowstone A-Prime).